The primary structure comprises 212 residues: Phosphatidylserine decarboxylase proenzyme (212 aa).

Ser-182 functions as the Schiff-base intermediate with substrate; via pyruvic acid in the catalytic mechanism. Ser-182 carries the post-translational modification Pyruvic acid (Ser); by autocatalysis.

Belongs to the phosphatidylserine decarboxylase family. PSD-A subfamily. As to quaternary structure, heterodimer of a large membrane-associated beta subunit and a small pyruvoyl-containing alpha subunit. The cofactor is pyruvate. Is synthesized initially as an inactive proenzyme. Formation of the active enzyme involves a self-maturation process in which the active site pyruvoyl group is generated from an internal serine residue via an autocatalytic post-translational modification. Two non-identical subunits are generated from the proenzyme in this reaction, and the pyruvate is formed at the N-terminus of the alpha chain, which is derived from the carboxyl end of the proenzyme. The post-translation cleavage follows an unusual pathway, termed non-hydrolytic serinolysis, in which the side chain hydroxyl group of the serine supplies its oxygen atom to form the C-terminus of the beta chain, while the remainder of the serine residue undergoes an oxidative deamination to produce ammonia and the pyruvoyl prosthetic group on the alpha chain.

The protein localises to the cell membrane. It carries out the reaction a 1,2-diacyl-sn-glycero-3-phospho-L-serine + H(+) = a 1,2-diacyl-sn-glycero-3-phosphoethanolamine + CO2. The protein operates within phospholipid metabolism; phosphatidylethanolamine biosynthesis; phosphatidylethanolamine from CDP-diacylglycerol: step 2/2. Its function is as follows. Catalyzes the formation of phosphatidylethanolamine (PtdEtn) from phosphatidylserine (PtdSer). This chain is Phosphatidylserine decarboxylase proenzyme, found in Chlorobium phaeobacteroides (strain DSM 266 / SMG 266 / 2430).